The chain runs to 337 residues: MTNVFKGRHFLAEKDFTRAELEWLIDFSAHLKDLKKRNIPHRYLEGKNIALLFEKTSTRTRAAFTVASIDLGAHPEYLGANDIQLGKKESTEDTAKVLGRMFDGIEFRGFSQKMVEELAEFSGVPVWNGLTDAWHPTQMLADYLTVKENFGKLEGLTLVYCGDGRNNVANSLLVTGAILGVNVHIFSPKELFPEEEVVALAEGFAKESGARVLITDNADEAVKGADVLYTDVWVSMGEEDKFAERVALLKPYQVNMELVKKAENENLIFLHCLPAFHDTNTVYGKDVAEKFGVEEMEVTDEVFRSKYARHFDQAENRMHTIKAVMAATLGDPFVPRV.

Carbamoyl phosphate is bound by residues 57-60 (STRT), Gln-84, Arg-108, and 135-138 (HPTQ). Residues Asn-167, Asp-231, and 235-236 (SM) contribute to the L-ornithine site. Carbamoyl phosphate is bound by residues 272–273 (CL) and Arg-317.

The protein belongs to the aspartate/ornithine carbamoyltransferase superfamily. OTCase family.

The protein localises to the cytoplasm. It catalyses the reaction carbamoyl phosphate + L-ornithine = L-citrulline + phosphate + H(+). It functions in the pathway amino-acid degradation; L-arginine degradation via ADI pathway; carbamoyl phosphate from L-arginine: step 2/2. Its function is as follows. Reversibly catalyzes the transfer of the carbamoyl group from carbamoyl phosphate (CP) to the N(epsilon) atom of ornithine (ORN) to produce L-citrulline. This chain is Ornithine carbamoyltransferase, catabolic, found in Streptococcus suis (strain 89/1591).